A 244-amino-acid chain; its full sequence is Protein pendolino (244 aa).

The 157-residue stretch at Gln20–Glu176 folds into the UBC core domain.

The protein belongs to the ubiquitin-conjugating enzyme family. FTS subfamily. Interacts (via N-terminus) with cav/HOAP (via N-terminus); the interaction is direct. Probably interacts (via N-terminus and UBC domain) with ver and moi.

Its subcellular location is the nucleus. It localises to the nucleolus. The protein localises to the chromosome. Required for efficient DNA replication, probably through involvement in telomere replication. May have a role in telomere capping of heterochromatic chromosome ends. This is Protein pendolino from Drosophila melanogaster (Fruit fly).